The following is a 194-amino-acid chain: Isopentenyl-diphosphate Delta-isomerase (194 aa).

Mn(2+) contacts are provided by histidine 23 and histidine 30. The region spanning proline 28–glutamine 162 is the Nudix hydrolase domain. Cysteine 65 is a catalytic residue. A Mn(2+)-binding site is contributed by histidine 67. Glutamate 85 serves as a coordination point for Mg(2+). Positions 112 and 114 each coordinate Mn(2+). The active site involves glutamate 114.

It belongs to the IPP isomerase type 1 family. It depends on Mg(2+) as a cofactor. The cofactor is Mn(2+).

The protein resides in the cytoplasm. It carries out the reaction isopentenyl diphosphate = dimethylallyl diphosphate. Its pathway is isoprenoid biosynthesis; dimethylallyl diphosphate biosynthesis; dimethylallyl diphosphate from isopentenyl diphosphate: step 1/1. Its function is as follows. Catalyzes the 1,3-allylic rearrangement of the homoallylic substrate isopentenyl (IPP) to its highly electrophilic allylic isomer, dimethylallyl diphosphate (DMAPP). In Saccharopolyspora erythraea (strain ATCC 11635 / DSM 40517 / JCM 4748 / NBRC 13426 / NCIMB 8594 / NRRL 2338), this protein is Isopentenyl-diphosphate Delta-isomerase.